Consider the following 729-residue polypeptide: Fatty acid oxidation complex subunit alpha (729 aa).

The enoyl-CoA hydratase/isomerase stretch occupies residues 1-189 (MLYQSETLQL…KIGLVDAVVD (189 aa)). Substrate is bound at residue D296. The segment at 311 to 729 (AAPKLAAVLG…LLDVSTNQPA (419 aa)) is 3-hydroxyacyl-CoA dehydrogenase. NAD(+) is bound by residues M324, D343, 400–402 (VVE), K407, and S429. The For 3-hydroxyacyl-CoA dehydrogenase activity role is filled by H450. N453 contacts NAD(+). Substrate is bound by residues N500 and Y660.

In the N-terminal section; belongs to the enoyl-CoA hydratase/isomerase family. This sequence in the C-terminal section; belongs to the 3-hydroxyacyl-CoA dehydrogenase family. Heterotetramer of two alpha chains (FadB) and two beta chains (FadA).

It catalyses the reaction a (3S)-3-hydroxyacyl-CoA + NAD(+) = a 3-oxoacyl-CoA + NADH + H(+). It carries out the reaction a (3S)-3-hydroxyacyl-CoA = a (2E)-enoyl-CoA + H2O. The catalysed reaction is a 4-saturated-(3S)-3-hydroxyacyl-CoA = a (3E)-enoyl-CoA + H2O. The enzyme catalyses (3S)-3-hydroxybutanoyl-CoA = (3R)-3-hydroxybutanoyl-CoA. It catalyses the reaction a (3Z)-enoyl-CoA = a 4-saturated (2E)-enoyl-CoA. It carries out the reaction a (3E)-enoyl-CoA = a 4-saturated (2E)-enoyl-CoA. The protein operates within lipid metabolism; fatty acid beta-oxidation. Functionally, involved in the aerobic and anaerobic degradation of long-chain fatty acids via beta-oxidation cycle. Catalyzes the formation of 3-oxoacyl-CoA from enoyl-CoA via L-3-hydroxyacyl-CoA. It can also use D-3-hydroxyacyl-CoA and cis-3-enoyl-CoA as substrate. This is Fatty acid oxidation complex subunit alpha from Yersinia pseudotuberculosis serotype O:1b (strain IP 31758).